The primary structure comprises 919 residues: Isoleucine--tRNA ligase (919 aa).

Residues 57–67 (PYANGDIHMGT) carry the 'HIGH' region motif. Glu-552 contacts L-isoleucyl-5'-AMP. The 'KMSKS' region signature appears at 593 to 597 (KMSKS). Lys-596 contributes to the ATP binding site. Cys-886, Cys-889, Cys-906, and Cys-909 together coordinate Zn(2+).

It belongs to the class-I aminoacyl-tRNA synthetase family. IleS type 1 subfamily. In terms of assembly, monomer. Requires Zn(2+) as cofactor.

Its subcellular location is the cytoplasm. It catalyses the reaction tRNA(Ile) + L-isoleucine + ATP = L-isoleucyl-tRNA(Ile) + AMP + diphosphate. Functionally, catalyzes the attachment of isoleucine to tRNA(Ile). As IleRS can inadvertently accommodate and process structurally similar amino acids such as valine, to avoid such errors it has two additional distinct tRNA(Ile)-dependent editing activities. One activity is designated as 'pretransfer' editing and involves the hydrolysis of activated Val-AMP. The other activity is designated 'posttransfer' editing and involves deacylation of mischarged Val-tRNA(Ile). The protein is Isoleucine--tRNA ligase of Petrotoga mobilis (strain DSM 10674 / SJ95).